Here is a 614-residue protein sequence, read N- to C-terminus: Phosphomethylpyrimidine synthase (614 aa).

Substrate is bound by residues asparagine 226, methionine 255, tyrosine 284, histidine 320, 340 to 342 (SRG), 381 to 384 (DGLR), and glutamate 420. Histidine 424 is a binding site for Zn(2+). Tyrosine 447 serves as a coordination point for substrate. Histidine 488 contributes to the Zn(2+) binding site. [4Fe-4S] cluster contacts are provided by cysteine 568, cysteine 571, and cysteine 576.

The protein belongs to the ThiC family. As to quaternary structure, homodimer. [4Fe-4S] cluster is required as a cofactor.

The catalysed reaction is 5-amino-1-(5-phospho-beta-D-ribosyl)imidazole + S-adenosyl-L-methionine = 4-amino-2-methyl-5-(phosphooxymethyl)pyrimidine + CO + 5'-deoxyadenosine + formate + L-methionine + 3 H(+). Its pathway is cofactor biosynthesis; thiamine diphosphate biosynthesis. Its function is as follows. Catalyzes the synthesis of the hydroxymethylpyrimidine phosphate (HMP-P) moiety of thiamine from aminoimidazole ribotide (AIR) in a radical S-adenosyl-L-methionine (SAM)-dependent reaction. The polypeptide is Phosphomethylpyrimidine synthase (Acidovorax ebreus (strain TPSY) (Diaphorobacter sp. (strain TPSY))).